The following is a 386-amino-acid chain: Alanine racemase (386 aa).

The Proton acceptor; specific for D-alanine role is filled by Lys-48. At Lys-48 the chain carries N6-(pyridoxal phosphate)lysine. Residue Arg-149 coordinates substrate. Tyr-278 serves as the catalytic Proton acceptor; specific for L-alanine. Residue Met-326 coordinates substrate.

The protein belongs to the alanine racemase family. Pyridoxal 5'-phosphate serves as cofactor.

The catalysed reaction is L-alanine = D-alanine. Its pathway is amino-acid biosynthesis; D-alanine biosynthesis; D-alanine from L-alanine: step 1/1. Its function is as follows. Catalyzes the interconversion of L-alanine and D-alanine. May also act on other amino acids. The polypeptide is Alanine racemase (alr) (Nostoc sp. (strain PCC 7120 / SAG 25.82 / UTEX 2576)).